A 189-amino-acid polypeptide reads, in one-letter code: Threonylcarbamoyl-AMP synthase (189 aa).

The region spanning Ala-9 to Arg-189 is the YrdC-like domain.

This sequence belongs to the SUA5 family. TsaC subfamily.

The protein localises to the cytoplasm. It catalyses the reaction L-threonine + hydrogencarbonate + ATP = L-threonylcarbamoyladenylate + diphosphate + H2O. Its function is as follows. Required for the formation of a threonylcarbamoyl group on adenosine at position 37 (t(6)A37) in tRNAs that read codons beginning with adenine. Catalyzes the conversion of L-threonine, HCO(3)(-)/CO(2) and ATP to give threonylcarbamoyl-AMP (TC-AMP) as the acyladenylate intermediate, with the release of diphosphate. The protein is Threonylcarbamoyl-AMP synthase of Neisseria meningitidis serogroup C (strain 053442).